The chain runs to 568 residues: Protein KATNIP homolog (568 aa).

Residues 1–20 (MSDSDLKEIEKNAENIKLEP) are compositionally biased toward basic and acidic residues. Residues 1–30 (MSDSDLKEIEKNAENIKLEPAEDEVNEEDQ) are disordered. Positions 21–30 (AEDEVNEEDQ) are enriched in acidic residues.

As to expression, expressed in most ciliated neuronal cells. Not expressed in non-ciliated cells.

It is found in the cytoplasm. It localises to the cytoskeleton. Its subcellular location is the cilium axoneme. The protein localises to the cilium basal body. Its function is as follows. May regulate ciliary A-tubule number and, along with arl-13, controls cilium integrity. The chain is Protein KATNIP homolog from Caenorhabditis elegans.